A 135-amino-acid chain; its full sequence is Crustacean hyperglycemic hormones A* (135 aa).

A signal peptide spans 1–26; it reads MVSFRTMWSVVVVVVVASLASSGVQG. Gln-62 carries the post-translational modification Pyrrolidone carboxylic acid. Disulfide bonds link Cys-68-Cys-104, Cys-84-Cys-100, and Cys-87-Cys-113. Val-133 is modified (valine amide).

Belongs to the arthropod CHH/MIH/GIH/VIH hormone family. Produced by the medulla terminalis X-organ in the eyestalks and transported to the sinus gland where they are stored and released.

It localises to the secreted. In terms of biological role, hormone found in the sinus gland of isopods and decapods which controls the blood sugar level. Has a secretagogue action over the amylase released from the midgut gland. May act as a stress hormone and may be involved in the control of molting and reproduction. The polypeptide is Crustacean hyperglycemic hormones A* (CHHA*) (Faxonius limosus (Spinycheek crayfish)).